A 599-amino-acid polypeptide reads, in one-letter code: UPF0313 protein UNCMA_01890 (599 aa).

The Radical SAM core domain maps to 281 to 557 (EDIPALRTVR…RALLQYKNPE (277 aa)). Residues Cys-299, Cys-303, and Cys-306 each contribute to the [4Fe-4S] cluster site.

It belongs to the UPF0313 family. It depends on [4Fe-4S] cluster as a cofactor.

The sequence is that of UPF0313 protein UNCMA_01890 from Methanocella arvoryzae (strain DSM 22066 / NBRC 105507 / MRE50).